A 96-amino-acid polypeptide reads, in one-letter code: Protein Vpr (96 aa).

The homooligomerization stretch occupies residues Met1–Leu42. Ser79, Ser94, and Ser96 each carry phosphoserine; by host.

The protein belongs to the HIV-1 VPR protein family. Homooligomer, may form homodimer. Interacts with p6-gag region of the Pr55 Gag precursor protein through a (Leu-X-X)4 motif near the C-terminus of the P6gag protein. Interacts with host UNG. May interact with host RAD23A/HHR23A. Interacts with host VPRBP/DCAF1, leading to hijack the CUL4A-RBX1-DDB1-DCAF1/VPRBP complex, mediating ubiquitination of host proteins such as TERT and ZGPAT and arrest of the cell cycle in G2 phase. Phosphorylated on several residues by host. These phosphorylations regulate VPR activity for the nuclear import of the HIV-1 pre-integration complex.

The protein resides in the virion. It is found in the host nucleus. Its subcellular location is the host extracellular space. Its function is as follows. During virus replication, may deplete host UNG protein, and incude G2-M cell cycle arrest. Acts by targeting specific host proteins for degradation by the 26S proteasome, through association with the cellular CUL4A-DDB1 E3 ligase complex by direct interaction with host VPRPB/DCAF-1. Cell cycle arrest reportedly occurs within hours of infection and is not blocked by antiviral agents, suggesting that it is initiated by the VPR carried into the virion. Additionally, VPR induces apoptosis in a cell cycle dependent manner suggesting that these two effects are mechanistically linked. Detected in the serum and cerebrospinal fluid of AIDS patient, VPR may also induce cell death to bystander cells. During virus entry, plays a role in the transport of the viral pre-integration (PIC) complex to the host nucleus. This function is crucial for viral infection of non-dividing macrophages. May act directly at the nuclear pore complex, by binding nucleoporins phenylalanine-glycine (FG)-repeat regions. This is Protein Vpr from Human immunodeficiency virus type 1 group M subtype B (isolate SF33) (HIV-1).